A 291-amino-acid chain; its full sequence is Beta-lactamase CTX-M-97 (291 aa).

A signal peptide spans M1–A28. The active-site Acyl-ester intermediate is S73. K237–G239 provides a ligand contact to substrate.

Belongs to the class-A beta-lactamase family.

It catalyses the reaction a beta-lactam + H2O = a substituted beta-amino acid. Functionally, is probably capable of hydrolyzing cephalosporins such as ceftriaxone and ceftazidime, thus conferring resistance to these antibiotics. The chain is Beta-lactamase CTX-M-97 (bla) from Escherichia coli.